Consider the following 435-residue polypeptide: Probable aminotransferase gliI (435 aa).

Lys-266 is modified (N6-(pyridoxal phosphate)lysine).

This sequence belongs to the class-I pyridoxal-phosphate-dependent aminotransferase family. Pyridoxal 5'-phosphate is required as a cofactor.

Its pathway is mycotoxin biosynthesis. Probable aminotransferase; part of the gene cluster that mediates the biosynthesis of gliotoxin, a member of the epipolythiodioxopiperazine (ETP) class of toxins characterized by a disulfide bridged cyclic dipeptide. The first step in gliotoxin biosynthesis is the condensation of serine and phenylalanine to form the cyclo-L-phenylalanyl-L-serine diketopiperazine (DKP) by the NRPS gliP. GliP is also able to produce the DKP cyclo-L-tryptophanyl-L-serine, suggesting that the substrate specificity of the first adenylation (A) domain in gliP is sufficiently relaxed to accommodate both L-Phe and L-Trp. The cytochrome P450 monooxygenase gliC has been shown to catalyze the subsequent hydroxylation of the alpha-carbon of L-Phe in cyclo-L-phenylalanyl-L-serine whereas the second cytochrome P450 enzyme, gliF, is presumably involved in the modification of the DKP side chain. The glutathione S-transferase (GST) gliG then forms a bis-glutathionylated biosynthetic intermediate which is responsible for the sulfurization of gliotoxin. This bis-glutathionylated intermediate is subsequently processed by the gamma-glutamyl cyclotransferase gliK to remove both gamma-glutamyl moieties. Subsequent processing via gliI yields a biosynthetic intermediate, which is N-methylated via the N-methyltransferase gliN, before the gliotoxin oxidoreductase gliT-mediated disulfide bridge closure. GliN-mediated amide methylation confers stability to ETP, damping the spontaneous formation of tri- and tetrasulfides. Intracellular dithiol gliotoxin oxidized by gliT is subsequently effluxed by gliA. Gliotoxin contributes to pathogenesis during invasive aspergillosis. In macrophages and neutrophils, gliotoxin showed inhibition of various different cell functions including cytokine production, antigen presentation, phagocytosis, and production of reactive oxygen species. The chain is Probable aminotransferase gliI from Aspergillus fumigatus (strain ATCC MYA-4609 / CBS 101355 / FGSC A1100 / Af293) (Neosartorya fumigata).